Consider the following 322-residue polypeptide: SUMO-activating enzyme subunit 1A (322 aa).

M1 bears the N-acetylmethionine mark.

It belongs to the ubiquitin-activating E1 family. In terms of assembly, heterodimer of SAE1A or SAE1B and SAE2. The complex binds SUMO proteins via SAE2.

It is found in the nucleus. It participates in protein modification; protein sumoylation. Functionally, the dimeric enzyme acts as an E1 ligase for SUMO1 and SUMO2. It mediates ATP-dependent activation of SUMO proteins and formation of a thioester with a conserved cysteine residue on SAE2. Functionally redundant with its paralog SAE1B. The chain is SUMO-activating enzyme subunit 1A (SAE1A) from Arabidopsis thaliana (Mouse-ear cress).